A 513-amino-acid chain; its full sequence is ATP synthase subunit alpha (513 aa).

Residue 169–176 participates in ATP binding; sequence GDRQIGKT.

This sequence belongs to the ATPase alpha/beta chains family. F-type ATPases have 2 components, CF(1) - the catalytic core - and CF(0) - the membrane proton channel. CF(1) has five subunits: alpha(3), beta(3), gamma(1), delta(1), epsilon(1). CF(0) has three main subunits: a(1), b(2) and c(9-12). The alpha and beta chains form an alternating ring which encloses part of the gamma chain. CF(1) is attached to CF(0) by a central stalk formed by the gamma and epsilon chains, while a peripheral stalk is formed by the delta and b chains.

The protein resides in the cell inner membrane. It carries out the reaction ATP + H2O + 4 H(+)(in) = ADP + phosphate + 5 H(+)(out). Its function is as follows. Produces ATP from ADP in the presence of a proton gradient across the membrane. The alpha chain is a regulatory subunit. This Shewanella halifaxensis (strain HAW-EB4) protein is ATP synthase subunit alpha.